The primary structure comprises 409 residues: Elongation factor Tu, chloroplastic (409 aa).

A tr-type G domain is found at 10–214 (KPHVNIGTIG…AVDAYIPTPE (205 aa)). Residues 19–26 (GHVDHGKT) form a G1 region. A GTP-binding site is contributed by 19–26 (GHVDHGKT). Threonine 26 contributes to the Mg(2+) binding site. Residues 60–64 (GITIN) are G2. Residues 81 to 84 (DCPG) form a G3 region. Residues 81–85 (DCPGH) and 136–139 (NKQD) each bind GTP. The segment at 136–139 (NKQD) is G4. The interval 174–176 (SAL) is G5.

The protein belongs to the TRAFAC class translation factor GTPase superfamily. Classic translation factor GTPase family. EF-Tu/EF-1A subfamily.

The protein resides in the plastid. It is found in the chloroplast. It catalyses the reaction GTP + H2O = GDP + phosphate + H(+). In terms of biological role, GTP hydrolase that promotes the GTP-dependent binding of aminoacyl-tRNA to the A-site of ribosomes during protein biosynthesis. The polypeptide is Elongation factor Tu, chloroplastic (tufA) (Thalassiosira pseudonana (Marine diatom)).